The chain runs to 102 residues: uncharacterized protein (102 aa).

An N-terminal signal peptide occupies residues 1–19 (MFLFCFVLFCSLVFPLARG).

This is an uncharacterized protein from Saccharomyces cerevisiae (strain ATCC 204508 / S288c) (Baker's yeast).